The primary structure comprises 101 residues: Large ribosomal subunit protein uL24 (101 aa).

It belongs to the universal ribosomal protein uL24 family. In terms of assembly, part of the 50S ribosomal subunit.

One of two assembly initiator proteins, it binds directly to the 5'-end of the 23S rRNA, where it nucleates assembly of the 50S subunit. Functionally, one of the proteins that surrounds the polypeptide exit tunnel on the outside of the subunit. The polypeptide is Large ribosomal subunit protein uL24 (Streptococcus pneumoniae (strain ATCC 700669 / Spain 23F-1)).